Consider the following 62-residue polypeptide: Photosystem II reaction center protein Z (62 aa).

A run of 2 helical transmembrane segments spans residues 8 to 28 (TLLAFIGLSLALVIGVPVLLA) and 41 to 61 (FSGSALWMLLVFVVGALNSFV).

Belongs to the PsbZ family. In terms of assembly, PSII is composed of 1 copy each of membrane proteins PsbA, PsbB, PsbC, PsbD, PsbE, PsbF, PsbH, PsbI, PsbJ, PsbK, PsbL, PsbM, PsbT, PsbY, PsbZ, Psb30/Ycf12, at least 3 peripheral proteins of the oxygen-evolving complex and a large number of cofactors. It forms dimeric complexes.

The protein resides in the plastid. Its subcellular location is the chloroplast thylakoid membrane. In terms of biological role, may control the interaction of photosystem II (PSII) cores with the light-harvesting antenna, regulates electron flow through the 2 photosystem reaction centers. PSII is a light-driven water plastoquinone oxidoreductase, using light energy to abstract electrons from H(2)O, generating a proton gradient subsequently used for ATP formation. This Ostreococcus tauri protein is Photosystem II reaction center protein Z.